The following is a 253-amino-acid chain: CTP:phosphoglutamine cytidylyltransferase (253 aa).

It carries out the reaction N(5)-phospho-L-glutamine + CTP + H(+) = N(5)-(cytidine 5'-diphosphoramidyl)-L-glutamine + diphosphate. It functions in the pathway capsule biogenesis; capsule polysaccharide biosynthesis. Functionally, involved in the biosynthesis of the O-methyl phosphoramidate (MeOPN) group found on the capsular polysaccharide (CPS) of C.jejuni. Catalyzes the formation of CDP-L-glutamine from CTP and L-glutamine phosphate. In the presence of MnCTP, catalyzes the displacement of pyrophosphate from CTP using phosphoramidate, methyl phosphate, methyl phosphonate, phosphate, arsenate, ethanolamine phosphate, (R/S)-glycerol-1-phosphate, glycerol-2-phosphate, serinol phosphate, L-serine phosphate and 3-phospho-D-glycerate as substrate in addition to L-glutamine phosphate. This chain is CTP:phosphoglutamine cytidylyltransferase, found in Campylobacter jejuni subsp. jejuni serotype O:2 (strain ATCC 700819 / NCTC 11168).